Reading from the N-terminus, the 500-residue chain is NAD(P)H-quinone oxidoreductase subunit 2, chloroplastic (500 aa).

The next 13 membrane-spanning stretches (helical) occupy residues 15–35 (ILPE…DLSL), 42–62 (WIIY…CLQW), 79–99 (FSIA…LLSI), 109–129 (LMEF…LCGA), 132–152 (LITI…LAGY), 167–187 (LLVG…LYGL), 201–221 (LIFA…CIIV), 247–267 (VVAF…IRII), 278–298 (WQFL…LVAI), 306–326 (MLAY…ISST), 334–354 (LVYM…VILF), 377–397 (ASCL…AGFF), and 400–420 (IYLF…VGLL).

This sequence belongs to the complex I subunit 2 family. NDH is composed of at least 16 different subunits, 5 of which are encoded in the nucleus.

It is found in the plastid. Its subcellular location is the chloroplast thylakoid membrane. The catalysed reaction is a plastoquinone + NADH + (n+1) H(+)(in) = a plastoquinol + NAD(+) + n H(+)(out). It catalyses the reaction a plastoquinone + NADPH + (n+1) H(+)(in) = a plastoquinol + NADP(+) + n H(+)(out). Its function is as follows. NDH shuttles electrons from NAD(P)H:plastoquinone, via FMN and iron-sulfur (Fe-S) centers, to quinones in the photosynthetic chain and possibly in a chloroplast respiratory chain. The immediate electron acceptor for the enzyme in this species is believed to be plastoquinone. Couples the redox reaction to proton translocation, and thus conserves the redox energy in a proton gradient. In Chaetosphaeridium globosum (Charophycean green alga), this protein is NAD(P)H-quinone oxidoreductase subunit 2, chloroplastic.